Reading from the N-terminus, the 158-residue chain is HTH-type transcriptional repressor NicR (158 aa).

The 133-residue stretch at 20 to 152 folds into the HTH marR-type domain; the sequence is TEQVGHLLRK…ILYLLRKMID (133 aa). Positions 66–89 form a DNA-binding region, H-T-H motif; the sequence is QAELIKATAVDQATIRGIVERLKA.

The protein operates within cofactor degradation; nicotinate degradation [regulation]. Functionally, transcriptional repressor for the nicCDEFTP and nicXR operons, encoding the lower aerobic nicotinate degradation pathway. Acts under non-induced conditions: repression of the nicCDEFTP and nicXR operons becomes alleviated in presence of 6-hydroxynicotinate (6HNA). The protein is HTH-type transcriptional repressor NicR (nicR) of Pseudomonas putida (strain ATCC 47054 / DSM 6125 / CFBP 8728 / NCIMB 11950 / KT2440).